Consider the following 306-residue polypeptide: N-acetylmuramic acid 6-phosphate etherase (306 aa).

The region spanning 59-222 (TAQALGRGGR…STGVMVCLGK (164 aa)) is the SIS domain. Glutamate 87 serves as the catalytic Proton donor. The active site involves glutamate 118.

The protein belongs to the GCKR-like family. MurNAc-6-P etherase subfamily. Homodimer.

The enzyme catalyses N-acetyl-D-muramate 6-phosphate + H2O = N-acetyl-D-glucosamine 6-phosphate + (R)-lactate. It participates in amino-sugar metabolism; N-acetylmuramate degradation. Functionally, specifically catalyzes the cleavage of the D-lactyl ether substituent of MurNAc 6-phosphate, producing GlcNAc 6-phosphate and D-lactate. In Rippkaea orientalis (strain PCC 8801 / RF-1) (Cyanothece sp. (strain PCC 8801)), this protein is N-acetylmuramic acid 6-phosphate etherase.